The primary structure comprises 84 residues: Small ribosomal subunit protein uS17 (84 aa).

The protein belongs to the universal ribosomal protein uS17 family. As to quaternary structure, part of the 30S ribosomal subunit.

In terms of biological role, one of the primary rRNA binding proteins, it binds specifically to the 5'-end of 16S ribosomal RNA. The sequence is that of Small ribosomal subunit protein uS17 from Serratia proteamaculans (strain 568).